Here is a 35-residue protein sequence, read N- to C-terminus: Conotoxin Cal6.1d (35 aa).

The propeptide occupies 1–8 (GLTRPSKR). 3 disulfide bridges follow: Cys9/Cys25, Cys16/Cys29, and Cys24/Cys34.

Belongs to the conotoxin O1 superfamily. Expressed by the venom duct.

It localises to the secreted. Functionally, probable neurotoxin with unknown target. Possibly targets ion channels. This Californiconus californicus (California cone) protein is Conotoxin Cal6.1d.